Here is a 631-residue protein sequence, read N- to C-terminus: 1-deoxy-D-xylulose-5-phosphate synthase (631 aa).

Positions 1–21 are disordered; the sequence is MPTTFHEIPRERPLTPLLDSA. Residues His87 and 128–130 each bind thiamine diphosphate; that span reads GHS. Residue Asp159 participates in Mg(2+) binding. Residues 160–161, Asn188, Phe295, and Glu377 contribute to the thiamine diphosphate site; that span reads GA. Asn188 is a binding site for Mg(2+).

Belongs to the transketolase family. DXPS subfamily. Homodimer. The cofactor is Mg(2+). Thiamine diphosphate is required as a cofactor.

The enzyme catalyses D-glyceraldehyde 3-phosphate + pyruvate + H(+) = 1-deoxy-D-xylulose 5-phosphate + CO2. The protein operates within metabolic intermediate biosynthesis; 1-deoxy-D-xylulose 5-phosphate biosynthesis; 1-deoxy-D-xylulose 5-phosphate from D-glyceraldehyde 3-phosphate and pyruvate: step 1/1. Functionally, catalyzes the acyloin condensation reaction between C atoms 2 and 3 of pyruvate and glyceraldehyde 3-phosphate to yield 1-deoxy-D-xylulose-5-phosphate (DXP). This is 1-deoxy-D-xylulose-5-phosphate synthase from Ectopseudomonas mendocina (strain ymp) (Pseudomonas mendocina).